The sequence spans 457 residues: MTTDEGAKNNEESPTATVAEQGEDITSKKDRGVLKIVKRVGNGEETPMIGDKVYVHYKGKLSNGKKFDSSHDRNEPFVFSLGKGQVIKAWDIGVATMKKGEICHLLCKPEYAYGSAGSLPKIPSNATLFFEIELLDFKGEDLFEDGGIIRRTKRKGEGYSNPNEGATVEIHLEGRCGGRMFDCRDVAFTVGEGEDHDIPIGIDKALEKMQREEQCILYLGPRYGFGEAGKPKFGIEPNAELIYEVTLKSFEKAKESWEMDTKEKLEQAAIVKEKGTVYFKGGKYMQAVIQYGKIVSWLEMEYGLSEKESKASESFLLAAFLNLAMCYLKLREYTKAVECCDKALGLDSANEKGLYRRGEAQLLMNEFESAKGDFEKVLEVNPQNKAARLQISMCQKKAKEHNERDRRIYANMFKKFAEQDAKEEANKAMGKKTSEGVTNEKGTDSQAMEEEKPEGHV.

Methionine 1 is modified (N-acetylmethionine). A compositionally biased stretch (basic and acidic residues) spans 1–11 (MTTDEGAKNNE). Positions 1–24 (MTTDEGAKNNEESPTATVAEQGED) are disordered. Serine 13 bears the Phosphoserine mark. Residue lysine 28 is modified to N6-acetyllysine. The PPIase FKBP-type 1 domain maps to 42 to 130 (NGEETPMIGD…KIPSNATLFF (89 aa)). An N6-acetyllysine modification is found at lysine 155. Residues 157 to 243 (EGYSNPNEGA…GIEPNAELIY (87 aa)) form the PPIase FKBP-type 2 domain. TPR repeat units follow at residues 268–301 (AAIV…LEME), 317–350 (LAAF…DSAN), and 351–384 (EKGL…NPQN). Positions 420 to 457 (DAKEEANKAMGKKTSEGVTNEKGTDSQAMEEEKPEGHV) are disordered. The residue at position 445 (serine 445) is a Phosphoserine.

Part of a heteromultimeric cytoplasmic complex with HSP90AA1, HSPA1A/HSPA1B and steroid receptors. Upon ligand binding dissociates from the complex and FKBP4 takes its place. Interacts with functionally mature heterooligomeric progesterone receptor complexes along with HSP90 and TEBP. Interacts with NR3C1. Interacts with Akt/AKT1 and PHLPP1; enhancing dephosphorylation and subsequent activation of Akt/AKT1. Interacts with IFI44L; this interaction modulates the kinase activity of IKBKB and IKBKE. Interacts with IKBKB and IKBKE. Acetylation impairs ability to promote interaction between Akt/AKT1 and PHLPP1. Deacetylation by SIRT7 promotes interaction between Akt/AKT1 and PHLPP1, leading to suppress Akt/AKT1 activation. Post-translationally, ubiquitinated, leading to degradation in a proteasome-dependent manner. Deubiquitinated by USP49, leading to stabilization. As to expression, widely expressed, enriched in testis compared to other tissues.

It is found in the cytoplasm. Its subcellular location is the nucleus. The enzyme catalyses [protein]-peptidylproline (omega=180) = [protein]-peptidylproline (omega=0). With respect to regulation, inhibited by both FK506 and rapamycin. Its function is as follows. Immunophilin protein with PPIase and co-chaperone activities. Component of unligated steroid receptors heterocomplexes through interaction with heat-shock protein 90 (HSP90). Plays a role in the intracellular trafficking of heterooligomeric forms of steroid hormone receptors maintaining the complex into the cytoplasm when unliganded. Acts as a regulator of Akt/AKT1 activity by promoting the interaction between Akt/AKT1 and PHLPP1, thereby enhancing dephosphorylation and subsequent activation of Akt/AKT1. Interacts with IKBKE and IKBKB which facilitates IKK complex assembly leading to increased IKBKE and IKBKB kinase activity, NF-kappa-B activation, and IFN production. This Homo sapiens (Human) protein is Peptidyl-prolyl cis-trans isomerase FKBP5 (FKBP5).